The primary structure comprises 695 residues: C6 finger domain transcription factor nscR (695 aa).

A DNA-binding region (zn(2)-C6 fungal-type) is located at residues 17 to 43 (CELCRERKVKCDKLDPCTNCASAGVVC). Over residues 101 to 113 (SMRSSASQSSNQD) the composition is skewed to low complexity. The tract at residues 101–146 (SMRSSASQSSNQDQESRDAIESISNETEDASAPTPDSSRMPLGDGG) is disordered.

Its subcellular location is the nucleus. Transcription factor that specifically regulates the neosartoricin B biosynthesis gene cluster. This chain is C6 finger domain transcription factor nscR, found in Arthroderma otae (strain ATCC MYA-4605 / CBS 113480) (Microsporum canis).